Reading from the N-terminus, the 179-residue chain is Pectinesterase inhibitor 5 (179 aa).

An N-terminal signal peptide occupies residues 1 to 25 (MATMLINHMLFLTSLLIVVFPVANA). 2 cysteine pairs are disulfide-bonded: Cys-35–Cys-44 and Cys-101–Cys-141.

The protein belongs to the PMEI family. In terms of tissue distribution, expressed in seeds, buds, and mature flowers.

The protein resides in the secreted. Its subcellular location is the extracellular space. It localises to the apoplast. Its function is as follows. Pectin methylesterase (PME) inhibitor that targets PME from seeds and modulates PME activity and pectin methylesterification during seed germination. This is Pectinesterase inhibitor 5 from Arabidopsis thaliana (Mouse-ear cress).